The primary structure comprises 381 residues: GDP-mannose transporter (381 aa).

At 1–44 (MAEGKKTDDYTIQMDSIDQGNKSFEAPPPPQPRSPPSGSLSNNP) the chain is on the cytoplasmic side. Residues 19–41 (QGNKSFEAPPPPQPRSPPSGSLS) are disordered. Residues 26-35 (APPPPQPRSP) show a composition bias toward pro residues. The chain crosses the membrane as a helical span at residues 45–65 (ILPVLAYCGSSILMTVMNKYV). The Lumenal segment spans residues 66–70 (LSGTD). The helical transmembrane segment at 71–91 (FNLNFFLLCIQSLVCIIAIQT) threads the bilayer. Over 92-109 (CKSCGLITYRDFSADEAR) the chain is Cytoplasmic. The chain crosses the membrane as a helical span at residues 110 to 126 (KWFPITLLLIGMIYTGS). Residues 127 to 133 (KALQFLS) lie on the Lumenal side of the membrane. The helical transmembrane segment at 134–150 (IPVYTIFKNLTIILIAY) threads the bilayer. Residues 151–159 (GEVLWFGGS) are Cytoplasmic-facing. Residues 160 to 181 (VTGLTLFSFGLMVLSSIIAAWA) traverse the membrane as a helical segment. Residues 182–199 (DIKHAVESNGDATAKVST) are Lumenal-facing. A helical membrane pass occupies residues 200–220 (LNAGYIWMLVNCLCTSSYVLG). Over 221–234 (MRKRIKLTNFKDFD) the chain is Cytoplasmic. Residues 235-255 (TMFYNNLLSIPVLIVLSAFLE) traverse the membrane as a helical segment. The Lumenal segment spans residues 256 to 273 (DWSSTNVNRNFPPMDRNS). Residues 274-294 (IVFAMILSGLSSVFISYTSAW) traverse the membrane as a helical segment. Topologically, residues 295 to 302 (CVRVTSST) are cytoplasmic. Residues 303 to 323 (TYSMVGALNKLPIAISGLIFF) form a helical membrane-spanning segment. The Lumenal portion of the chain corresponds to 324–326 (DAP). A helical transmembrane segment spans residues 327–347 (VTFPSVSAIVVGFVSGIVYAV). At 348 to 381 (AKIKQNAKPRTGVLPTANPPVSASSQSMRDSLRS) the chain is on the cytoplasmic side. Residues 358 to 381 (TGVLPTANPPVSASSQSMRDSLRS) form a disordered region. A compositionally biased stretch (polar residues) spans 366–381 (PPVSASSQSMRDSLRS).

The protein belongs to the TPT transporter family. SLC35D subfamily. Homooligomer.

The protein resides in the golgi apparatus membrane. It is found in the cytoplasmic vesicle membrane. It localises to the endoplasmic reticulum membrane. Functionally, involved in the import of GDP-mannose from the cytoplasm into the Golgi lumen. This Aspergillus niger (strain ATCC MYA-4892 / CBS 513.88 / FGSC A1513) protein is GDP-mannose transporter (gmt1).